Reading from the N-terminus, the 559-residue chain is Amino-acid acetyltransferase, mitochondrial (559 aa).

Residues 162-188 are disordered; the sequence is RLGPKPGSEDPTSELDFTPPETHTLPP. The N-acetyltransferase domain maps to 362–538; that stretch reads LPVQVFHSVS…GSAGLSYVED (177 aa).

It belongs to the acetyltransferase family.

It is found in the mitochondrion. It catalyses the reaction L-glutamate + acetyl-CoA = N-acetyl-L-glutamate + CoA + H(+). Its pathway is amino-acid biosynthesis; L-arginine biosynthesis; N(2)-acetyl-L-ornithine from L-glutamate: step 1/4. In terms of biological role, N-acetylglutamate synthase involved in arginine biosynthesis. The polypeptide is Amino-acid acetyltransferase, mitochondrial (ARG2) (Laccaria bicolor (strain S238N-H82 / ATCC MYA-4686) (Bicoloured deceiver)).